A 298-amino-acid polypeptide reads, in one-letter code: Iron-regulated virulence regulatory protein IrgB (298 aa).

The HTH lysR-type domain occupies 1–59 (MQDLSAVKAFHALCQHKSLTAAAKALEQPKSTLSRRLAQLEEDLGQSLLMRQGNRLTLT). The H-T-H motif DNA-binding region spans 19–38 (LTAAAKALEQPKSTLSRRLA).

Belongs to the LysR transcriptional regulatory family.

Its function is as follows. Transcription activation of the irgA gene. In the presence of sufficient iron, transcription of both irgA and irgB is negatively regulated by a fur-like protein. In low iron conditions, negative regulation of transcription is removed, and production of irgB leads to positive transcriptional activation of irgA. This is Iron-regulated virulence regulatory protein IrgB (irgB) from Vibrio cholerae serotype O1 (strain ATCC 39315 / El Tor Inaba N16961).